We begin with the raw amino-acid sequence, 233 residues long: Ribose-5-phosphate isomerase A (233 aa).

Residues 31–34, 87–90, and 100–103 contribute to the substrate site; these read SGST, DGAD, and KGGG. E109 serves as the catalytic Proton acceptor. Position 127 (K127) interacts with substrate.

This sequence belongs to the ribose 5-phosphate isomerase family. As to quaternary structure, homodimer.

The enzyme catalyses aldehydo-D-ribose 5-phosphate = D-ribulose 5-phosphate. It participates in carbohydrate degradation; pentose phosphate pathway; D-ribose 5-phosphate from D-ribulose 5-phosphate (non-oxidative stage): step 1/1. Its function is as follows. Catalyzes the reversible conversion of ribose-5-phosphate to ribulose 5-phosphate. This Chlamydia caviae (strain ATCC VR-813 / DSM 19441 / 03DC25 / GPIC) (Chlamydophila caviae) protein is Ribose-5-phosphate isomerase A.